A 610-amino-acid polypeptide reads, in one-letter code: Autophagy-related protein 22-1 (610 aa).

Residues 1 to 11 (MAFTPSSPPSP) show a composition bias toward pro residues. The interval 1–29 (MAFTPSSPPSPAADASQRPSRYPGEDTTP) is disordered. A helical membrane pass occupies residues 35 to 55 (ILGWYAYGIAAEVFAVCGVGS). Residue N90 is glycosylated (N-linked (GlcNAc...) asparagine). The next 3 membrane-spanning stretches (helical) occupy residues 120 to 140 (SFAM…LISF), 152 to 171 (TLLL…FVFV), and 189 to 209 (CLGS…ANDP). The disordered stretch occupies residues 229–265 (GQFEPRDSFSERNPEFESQYTPGIGLGSKPSTNATSP). The span at 232–243 (EPRDSFSERNPE) shows a compositional bias: basic and acidic residues. An N-linked (GlcNAc...) asparagine glycan is attached at N261. Transmembrane regions (helical) follow at residues 278 to 298 (VGLG…LLFA), 310 to 330 (TLPL…FTMV), 384 to 404 (VFLV…GTAI), 418 to 438 (VGCL…LWPV), 453 to 473 (LCIA…IPLF), 488 to 510 (FPLA…SFFG), 522 to 544 (YALY…GMLI), and 553 to 573 (GFFF…MVNA). The interval 588–610 (AKGQESETGEPGEEAEGLLARGA) is disordered. The span at 594 to 603 (ETGEPGEEAE) shows a compositional bias: acidic residues.

This sequence belongs to the ATG22 family.

It is found in the vacuole membrane. In terms of biological role, vacuolar effluxer which mediate the efflux of amino acids resulting from autophagic degradation. The release of autophagic amino acids allows the maintenance of protein synthesis and viability during nitrogen starvation. This is Autophagy-related protein 22-1 (atg22-1) from Aspergillus terreus (strain NIH 2624 / FGSC A1156).